A 396-amino-acid chain; its full sequence is Actin-related protein 6 (396 aa).

The protein belongs to the actin family. ARP6 subfamily. Interacts with CBX1 and CBX3.

Its subcellular location is the cytoplasm. It localises to the cytoskeleton. It is found in the nucleus. The protein resides in the nucleolus. Functionally, required for formation and/or maintenance of the proper nucleolar structure and function. Plays a dual role in the regulation of ribosomal DNA (rDNA) transcription. In the presence of high glucose, it maintains active rDNA transcription through H2A.Z deposition and under glucose starvation, is required for the repression of rDNA transcription, and this function may be independent of H2A.Z. This Gallus gallus (Chicken) protein is Actin-related protein 6 (ACTR6).